The primary structure comprises 333 residues: MSPGQDATLLERSIKIAFVVALYWVVSISMVFLNKYLLSEVSLDAPMFVTWFQCVVAVVTCFILGELRSYHPALEMFPRFAFDTHVAMKVLPLSLVFVGMIAFNNLALKFVGVAFYNVGRSLTTIFNVLLSFFMLQQRTSMPALLMCGVIVAGFFVGVNKEQEQADLTMAGIMYGVLASLCVALNAIYIKKVMPFVDNDMWKLTAYNNMNAIFLFLPVITFMGEIPDIAASEDVYSGNYWFLMTVAGLLGIAIGLVSMLQINVTSPLTHNISGTSKACAQTILALQLNDESRTATWWLGNVFVLGGSLGYVLVKRAEMKRDLEKVPSSADSKA.

A run of 8 helical transmembrane segments spans residues 13-33 (SIKI…MVFL), 45-65 (APMF…FILG), 95-115 (LVFV…GVAF), 139-159 (TSMP…VGVN), 169-189 (MAGI…AIYI), 211-231 (AIFL…IAAS), 239-259 (YWFL…VSML), and 293-313 (TATW…YVLV).

The protein belongs to the TPT transporter family. SLC35C subfamily.

Its subcellular location is the golgi apparatus membrane. It catalyses the reaction GMP(out) + GDP-beta-L-fucose(in) = GMP(in) + GDP-beta-L-fucose(out). In terms of biological role, antiporter specific for GDP-l-fucose and depending on the concomitant reverse transport of GMP. Involved in GDP-fucose import from the cytoplasm into the Golgi lumen. This Monosiga brevicollis (Choanoflagellate) protein is GDP-fucose transporter 1 (slc35c1).